A 295-amino-acid chain; its full sequence is Indole-3-glycerol phosphate synthase (295 aa).

It belongs to the TrpC family.

The catalysed reaction is 1-(2-carboxyphenylamino)-1-deoxy-D-ribulose 5-phosphate + H(+) = (1S,2R)-1-C-(indol-3-yl)glycerol 3-phosphate + CO2 + H2O. It participates in amino-acid biosynthesis; L-tryptophan biosynthesis; L-tryptophan from chorismate: step 4/5. The protein is Indole-3-glycerol phosphate synthase of Prochlorococcus marinus (strain MIT 9301).